The sequence spans 577 residues: CTP synthase (577 aa).

Residues 1 to 268 are amidoligase domain; it reads MDPAFIFITG…GALLCERLRL (268 aa). S14 contributes to the CTP binding site. S14 provides a ligand contact to UTP. Position 15 to 20 (15 to 20) interacts with ATP; sequence SLGKGI. Y55 is an L-glutamine binding site. Residue D72 coordinates ATP. Mg(2+) is bound by residues D72 and E142. Residues 149–151, 189–194, and K225 contribute to the CTP site; these read DIE and KTKPLQ. UTP-binding positions include 189–194 and K225; that span reads KTKPLQ. In terms of domain architecture, Glutamine amidotransferase type-1 spans 333-575; the sequence is TVALVGKYVS…VAAGLERKDS (243 aa). G396 provides a ligand contact to L-glutamine. The active-site Nucleophile; for glutamine hydrolysis is C423. Residues 424-427, E447, and R503 contribute to the L-glutamine site; that span reads LGMQ. Catalysis depends on residues H548 and E550.

It belongs to the CTP synthase family. In terms of assembly, homotetramer.

The catalysed reaction is UTP + L-glutamine + ATP + H2O = CTP + L-glutamate + ADP + phosphate + 2 H(+). The enzyme catalyses L-glutamine + H2O = L-glutamate + NH4(+). It catalyses the reaction UTP + NH4(+) + ATP = CTP + ADP + phosphate + 2 H(+). The protein operates within pyrimidine metabolism; CTP biosynthesis via de novo pathway; CTP from UDP: step 2/2. With respect to regulation, allosterically activated by GTP, when glutamine is the substrate; GTP has no effect on the reaction when ammonia is the substrate. The allosteric effector GTP functions by stabilizing the protein conformation that binds the tetrahedral intermediate(s) formed during glutamine hydrolysis. Inhibited by the product CTP, via allosteric rather than competitive inhibition. Its function is as follows. Catalyzes the ATP-dependent amination of UTP to CTP with either L-glutamine or ammonia as the source of nitrogen. Regulates intracellular CTP levels through interactions with the four ribonucleotide triphosphates. In Treponema pallidum (strain Nichols), this protein is CTP synthase.